The chain runs to 607 residues: UvrABC system protein C (607 aa).

Positions 16-94 constitute a GIY-YIG domain; that stretch reads GRPGVYRMFD…IKEWRPPYNI (79 aa). Residues 203-238 enclose the UVR domain; that stretch reads NALSEELSASMEKASMALEFERAAELRDQISMLRRV.

The protein belongs to the UvrC family. Interacts with UvrB in an incision complex.

Its subcellular location is the cytoplasm. Functionally, the UvrABC repair system catalyzes the recognition and processing of DNA lesions. UvrC both incises the 5' and 3' sides of the lesion. The N-terminal half is responsible for the 3' incision and the C-terminal half is responsible for the 5' incision. The protein is UvrABC system protein C of Ectopseudomonas mendocina (strain ymp) (Pseudomonas mendocina).